The following is a 132-amino-acid chain: Agouti-signaling protein (132 aa).

An N-terminal signal peptide occupies residues 1 to 22 (MDVTRLLLATLLVFLCFFTAYS). Asn39 is a glycosylation site (N-linked (GlcNAc...) asparagine). The segment at 61 to 87 (QISRKEAEKKRSSKKEASMKKVARPRT) is disordered. Over residues 63 to 79 (SRKEAEKKRSSKKEASM) the composition is skewed to basic and acidic residues. 5 disulfide bridges follow: Cys93–Cys108, Cys100–Cys114, Cys107–Cys125, Cys111–Cys132, and Cys116–Cys123. The region spanning 93–132 (CVATRDSCKSPAPACCDPCASCQCRFFRSACSCRVLSLNC) is the Agouti domain.

Its subcellular location is the secreted. Involved in the regulation of melanogenesis. The binding of ASP to MC1R precludes alpha-MSH initiated signaling and thus blocks production of cAMP, leading to a down-regulation of eumelanogenesis (brown/black pigment) and thus increasing synthesis of pheomelanin (yellow/red pigment). This is Agouti-signaling protein (ASIP) from Macaca nigra (Celebes black macaque).